Here is a 582-residue protein sequence, read N- to C-terminus: TRAF-type zinc finger domain-containing protein 1 (582 aa).

N-acetylalanine is present on Ala-2. The TRAF-type zinc-finger motif lies at 27–103 (IHEIHCQRNI…DLELSILKLK (77 aa)). Phosphoserine is present on Ser-191. The disordered stretch occupies residues 217–236 (EQERQERNRGQQPPKEGGEE). Residues Ser-278, Ser-320, Ser-326, Ser-327, Ser-409, Ser-415, Ser-430, and Ser-470 each carry the phosphoserine modification. Positions 401-582 (TEGIPRLDSQ…AGDAEEEEEE (182 aa)) are disordered. 2 stretches are compositionally biased toward polar residues: residues 454–471 (PINN…STSG) and 486–495 (LSNSDSQDIQ).

Interacts with MAVS, TICAM1, TRAF1, TRAF2, TRAF3. Interacts with TRAF6.

In terms of biological role, negative feedback regulator that controls excessive innate immune responses. Regulates both Toll-like receptor 4 (TLR4) and DDX58/RIG1-like helicases (RLH) pathways. May inhibit the LTR pathway by direct interaction with TRAF6 and attenuation of NF-kappa-B activation. May negatively regulate the RLH pathway downstream from MAVS and upstream of NF-kappa-B and IRF3. This chain is TRAF-type zinc finger domain-containing protein 1 (TRAFD1), found in Homo sapiens (Human).